A 401-amino-acid polypeptide reads, in one-letter code: Tumor necrosis factor receptor superfamily member 11B (401 aa).

The signal sequence occupies residues 1–21 (MNKWLCCALLVLLDIIEWTTQ). TNFR-Cys repeat units follow at residues 24–62 (LPPK…KTLC), 65–105 (CPDH…NRVC), 107–142 (CEEG…NTVC), and 145–185 (CPDG…DNVC). Intrachain disulfides connect Cys-41-Cys-54, Cys-44-Cys-62, Cys-65-Cys-80, Cys-83-Cys-97, Cys-87-Cys-105, Cys-107-Cys-118, Cys-124-Cys-142, and Cys-145-Cys-160. Asn-98 carries N-linked (GlcNAc...) asparagine glycosylation. 2 N-linked (GlcNAc...) asparagine glycosylation sites follow: Asn-165 and Asn-178. A disulfide bond links Cys-166 and Cys-185. Death domains are found at residues 198-269 (DVTL…MVKK) and 283-365 (RHLG…THSL). An N-linked (GlcNAc...) asparagine glycan is attached at Asn-289.

As to quaternary structure, homodimer. Interacts with TNFSF10 and TNFSF11. Highly expressed in liver, lung, stomach, intestines and calvaria. Highly expressed in decidua and placenta, and in embryo.

It is found in the secreted. Its function is as follows. Acts as a decoy receptor for TNFSF11/RANKL and thereby neutralizes its function in osteoclastogenesis. Inhibits the activation of osteoclasts and promotes osteoclast apoptosis in vitro. Bone homeostasis seems to depend on the local ratio between TNFSF11 and TNFRSF11B. May also play a role in preventing arterial calcification. May act as decoy receptor for TNFSF10/TRAIL and protect against apoptosis. TNFSF10/TRAIL binding blocks the inhibition of osteoclastogenesis. The protein is Tumor necrosis factor receptor superfamily member 11B (Tnfrsf11b) of Mus musculus (Mouse).